A 414-amino-acid chain; its full sequence is Secernin-1 (414 aa).

N-acetylalanine is present on A2. C9 is an active-site residue.

Belongs to the peptidase C69 family. Secernin subfamily.

Its subcellular location is the cytoplasm. Functionally, regulates exocytosis in mast cells. Increases both the extent of secretion and the sensitivity of mast cells to stimulation with calcium. This is Secernin-1 (SCRN1) from Homo sapiens (Human).